Consider the following 338-residue polypeptide: Rho GTPase-activating protein gacA (338 aa).

A Rho-GAP domain is found at N149–H327.

The protein localises to the cytoplasm. Its function is as follows. Rho GTPase-activating protein involved in the signal transduction pathway. This Dictyostelium discoideum (Social amoeba) protein is Rho GTPase-activating protein gacA (gacA).